Consider the following 393-residue polypeptide: uncharacterized protein (393 aa).

A Flavodoxin-like domain is found at Ala-250–Ala-389.

This is an uncharacterized protein from Methanocaldococcus jannaschii (strain ATCC 43067 / DSM 2661 / JAL-1 / JCM 10045 / NBRC 100440) (Methanococcus jannaschii).